The sequence spans 88 residues: Small ribosomal subunit protein uS19 (88 aa).

Belongs to the universal ribosomal protein uS19 family.

Protein S19 forms a complex with S13 that binds strongly to the 16S ribosomal RNA. This is Small ribosomal subunit protein uS19 from Chlamydia abortus (strain DSM 27085 / S26/3) (Chlamydophila abortus).